We begin with the raw amino-acid sequence, 83 residues long: MPGDMQETMMFKVEKEEKVRVRDVLTEVQAALTEKGYDPINQLIGYLLSGDPAYITSHKGARNLIRRVERDEILAELLKSYLA.

The protein belongs to the UPF0297 family.

In Moorella thermoacetica (strain ATCC 39073 / JCM 9320), this protein is UPF0297 protein Moth_1643.